A 775-amino-acid chain; its full sequence is MSCPHLTETNVVIPDNSQVIYREECVRCFNSQDEEGGIDLCLTCFQSGCGETGLKHSLVHFEQTLHPIVVTIARQPKQKINDEPPQKITKLEIREDSDEDLYDYFYVPKCLVCNIILDIQDPLLSLSLEAMKNATKASNKSQLTAWENELTTCDHIINLPENETYVTNLDNATCSKCDLAENLWMCLTCGALSCGRKQYGGGGGNGHALSHYDDTGHPLAVKLKSISPDGQADIYCYSCDEERIDPNIKTHMLNFGIDIAKLNKTEKSLAELQLEQNLNWDFGASEEDDASKRLFGPGLTGLKNLGNSCYLASTMQSLFSIKEFAIHELNLFNTYNSVCQTPTTDLQCQLGKLADGLVSGKFSKPSKIGLLNNPSSSILPYQDGLRPFMFKDVVGQGHSEFGTSQQQDAYEFLLYLLGKIRKSSIAKTDITKIFDFETEQKLSCLSCKRVRYSSFSSQGLTLTVPRVKIGEIEGEQIYEEVSIDQCLDATIQPDQMEYTCEACKSKLGATTTTAMKSFPKVLILQANRFDLQGYQVKKLSIPIIVNEDGIYNFDRLMAKDHPNDEDYLPEKTETIEWNQSAIEQLQAMGFPLVRCQRALLATGNSDTETAMNWLFEHMEDPEIDKPIEVSELLPKADSSVSEENVQSLCEFGFTVAQARKGLLESNNNIERAVDWILNHPDESFEEPPLEGSDSSIKNENMGSWESTNVPVNYNLKAIISHKGSSAHAGHYVAFIRKEIDGKQQWVLFNDEKVLQVASLEEAKTTGYVYLFERLD.

The UBP-type 1; degenerate zinc finger occupies 1–108 (MSCPHLTETN…EDLYDYFYVP (108 aa)). The Zn(2+) site is built by Cys25, Cys28, Cys41, Cys44, Cys49, His56, His60, His66, Cys153, His155, Cys174, Cys177, Cys186, Cys189, Cys194, His207, His211, His217, Cys236, and Cys239. Residues 151–259 (TTCDHIINLP…THMLNFGIDI (109 aa)) form a UBP-type 2 zinc finger. A USP domain is found at 300–774 (TGLKNLGNSC…TGYVYLFERL (475 aa)). Cys309 (nucleophile) is an active-site residue. Ser456 bears the Phosphoserine mark. 2 consecutive UBA domains span residues 576-617 (EWNQ…LFEH) and 639-679 (SVSE…ILNH). His730 (proton acceptor) is an active-site residue.

The protein belongs to the peptidase C19 family.

The enzyme catalyses Thiol-dependent hydrolysis of ester, thioester, amide, peptide and isopeptide bonds formed by the C-terminal Gly of ubiquitin (a 76-residue protein attached to proteins as an intracellular targeting signal).. The protein is Ubiquitin carboxyl-terminal hydrolase 14 (ubp14) of Schizosaccharomyces pombe (strain 972 / ATCC 24843) (Fission yeast).